Consider the following 293-residue polypeptide: MAPANLPSIFNATSTDIEQLLAAQCHVGSKNLGVNMQPYLWKTRADGVNVINIGKTWEKITLAARIIAAIDNPSDVCVISARPYGQRAVLKFAAHTGAQAIAGRFTPGSFTNYITRSFKEPRLIIVTDPRTDSQAIKEASYVNIPVIALCDTDSPTEYVDVAIPTNNKGRHSIGLVWWMLAREVLRLRGTIYNRETPWDVMPDLYFYRDPEAEAEEKVEEEKVPGVEEEGPVAIESGFPAGGADWEAAPAGFPAAATGEWSEAQPATWESGAAAATGPSTEWADSAPKDTAGW.

Residues 239-293 form a disordered region; the sequence is PAGGADWEAAPAGFPAAATGEWSEAQPATWESGAAAATGPSTEWADSAPKDTAGW. The span at 247-256 shows a compositional bias: low complexity; that stretch reads AAPAGFPAAA.

It belongs to the universal ribosomal protein uS2 family. As to quaternary structure, component of the small ribosomal subunit. Mature ribosomes consist of a small (40S) and a large (60S) subunit. The 40S subunit contains about 33 different proteins and 1 molecule of RNA (18S). The 60S subunit contains about 49 different proteins and 3 molecules of RNA (25S, 5.8S and 5S). Interacts with RPS21.

It is found in the cytoplasm. Required for the assembly and/or stability of the 40S ribosomal subunit. Required for the processing of the 20S rRNA-precursor to mature 18S rRNA in a late step of the maturation of 40S ribosomal subunits. The protein is Small ribosomal subunit protein uS2 of Chaetomium globosum (strain ATCC 6205 / CBS 148.51 / DSM 1962 / NBRC 6347 / NRRL 1970) (Soil fungus).